A 139-amino-acid chain; its full sequence is Ribosome-binding factor A (139 aa).

The interval 120 to 139 (PENLLAVEDNTDEDDESFSE) is disordered. Over residues 128 to 139 (DNTDEDDESFSE) the composition is skewed to acidic residues.

Belongs to the RbfA family. Monomer. Binds 30S ribosomal subunits, but not 50S ribosomal subunits or 70S ribosomes.

Its subcellular location is the cytoplasm. One of several proteins that assist in the late maturation steps of the functional core of the 30S ribosomal subunit. Associates with free 30S ribosomal subunits (but not with 30S subunits that are part of 70S ribosomes or polysomes). Required for efficient processing of 16S rRNA. May interact with the 5'-terminal helix region of 16S rRNA. This is Ribosome-binding factor A from Nostoc punctiforme (strain ATCC 29133 / PCC 73102).